The chain runs to 990 residues: Type III restriction-modification enzyme StyLTI Res subunit (990 aa).

The interval 50–545 (NIDVKMETGT…GLRLPVDENG (496 aa)) is helicase-like domain. In terms of domain architecture, VRR-NUC spans 884–970 (LLKYDYPQQV…RQNINVEFAE (87 aa)). An endonuclease domain region spans residues 913–937 (STTPDFVYRIERQDADSVYLLVETK).

Belongs to the type III restriction-modification system Res protein family. Contains two different subunits: Res and Mod. Mg(2+) is required as a cofactor. The cofactor is S-adenosyl-L-methionine.

The enzyme catalyses Endonucleolytic cleavage of DNA to give specific double-stranded fragments with terminal 5'-phosphates.. A type III restriction enzyme that recognizes 2 inversely oriented double-stranded sequences 5'-CAGAG-3' and cleaves DNA 25-27 base pairs downstream. After binding to one recognition site undergoes random one-dimensional diffusion along DNA until it collides with a stationary enzyme bound to the second DNA site, which is when DNA cleavage occurs. DNA restriction requires both the Res and Mod subunits. The protein is Type III restriction-modification enzyme StyLTI Res subunit of Salmonella typhimurium (strain LT2 / SGSC1412 / ATCC 700720).